Here is a 773-residue protein sequence, read N- to C-terminus: Angiomotin-like protein 2 (773 aa).

Disordered regions lie at residues 41-157 (GGAG…HVRS), 169-238 (RNGA…SPHF), and 259-309 (QYQY…LAQM). Basic and acidic residues-rich tracts occupy residues 80–91 (QGGETHLAENRL), 100–112 (KGEE…EAKA), and 141–152 (RRQDEALRELRH). A required for interaction with CDH5 region spans residues 101-302 (GEELPTYEEA…GPPGAQATSG (202 aa)). Tyr-107 bears the Phosphotyrosine; by FGFR1 mark. The span at 177–190 (HMSSSHSFPQLARS) shows a compositional bias: polar residues. Residues 196–213 (PRGPPAEGPEPRGPPPQY) show a composition bias toward pro residues. The tract at residues 220–302 (QETAAVNDPR…GPPGAQATSG (83 aa)) is required for interaction with CDH1. Residues 304–577 (AHLAQMESVL…KYLEERAMRQ (274 aa)) are a coiled coil. Residues Lys-342 and Lys-403 each participate in a glycyl lysine isopeptide (Lys-Gly) (interchain with G-Cter in ubiquitin) cross-link. Disordered stretches follow at residues 589–611 (QRDT…NEGL) and 677–754 (WQGF…TTSL). Over residues 701-710 (EEPPATPPLP) the composition is skewed to pro residues. The segment covering 719–734 (DGSTQTDGPADSTSAC) has biased composition (polar residues). 2 positions are modified to phosphoserine: Ser-753 and Ser-756. The PDZ-binding signature appears at 770–773 (EILI).

Belongs to the angiomotin family. Part of a complex composed of AMOTL2, MAGI1 and CDH5, within the complex AMOTL2 acts as a scaffold protein for the interaction of MAGI1 with CDH5. The complex is required for coupling actin fibers to cell junctions in endothelial cells. Within the complex AMOTL2 (via its N-terminus) interacts with CDH5. Interacts (via N-terminus) with MAGI1. Interacts (via N-terminus) with ACTB; the interaction facilitates binding of cell junction complexes to actin fibers in endothelial cells. Interacts with CDH1; the interaction may facilitate binding of radial actin fibers to cell junction complexes. Interacts with SRC. Interacts with YAP1; the interaction is required for ubiquitination of AMOTL2 and localization of YAP1 to tight junctions. Interacts with WWP1; the interaction facilitates WWP1 interaction with the Crumbs complex and subsequent WWP1 translocation to the plasma membrane. WWP1 interaction with the Crumbs complex promotes WWP1 monoubiquitination of AMOTL2 which subsequently activates the Hippo signaling pathway. When ubiquitinated interacts with LATS2 (via UBA domain); the interaction promotes LATS2 phosphorylation of YAP1. Interacts (via PPXY motif) with WWTR1/TAZ (via WW domain); the interaction promotes WWTR1/TAZ localization to the cytoplasm and thereby inhibition of its transcriptional properties. Interacts with PHLDB2; interaction may facilitate PHLDB2 localization to the myotube podosome cortex that surrounds the core. Post-translationally, monoubiquitinated at Lys-342 and Lys-403 by Crumbs complex-bound WWP1. De-ubiquitinated at Lys-342 and Lys-403 by USP9X; the interaction may be promoted by cell contact inhibition. Deubiquitination of AMOTL2 negatively regulates Hippo signaling activation. In terms of processing, phosphorylation at Tyr-107 is necessary for efficient binding to SRC and synergistically functioning with SRC to activate the downstream MAPK pathway.

It localises to the recycling endosome. The protein localises to the cytoplasm. The protein resides in the cell projection. It is found in the podosome. Its subcellular location is the cell junction. Its function is as follows. Regulates the translocation of phosphorylated SRC to peripheral cell-matrix adhesion sites. Required for proper architecture of actin filaments. Plays a role in coupling actin fibers to cell junctions in endothelial cells and is therefore required for correct endothelial cell morphology via facilitating transcellular transmission of mechanical force resulting in endothelial cell elongation. Required for the anchoring of radial actin fibers to CDH1 junction complexes at the cell membrane which facilitates organization of radial actin fiber structure and cellular response to contractile forces. This contributes to maintenance of cell area, size, shape, epithelial sheet organization and trophectoderm cell properties that facilitate blastocyst zona hatching. Inhibits the Wnt/beta-catenin signaling pathway, probably by recruiting CTNNB1 to recycling endosomes and hence preventing its translocation to the nucleus. Participates in angiogenesis. Activates the Hippo signaling pathway in response to cell contact inhibition via interaction with and ubiquitination by Crumbs complex-bound WWP1. Ubiquitinated AMOTL2 then interacts with LATS2 which in turn phosphorylates YAP1, excluding it from the nucleus and localizing it to the cytoplasm and tight junctions, therefore ultimately repressing YAP1-driven transcription of target genes. Acts to inhibit WWTR1/TAZ transcriptional coactivator activity via sequestering WWTR1/TAZ in the cytoplasm and at tight junctions. Regulates the size and protein composition of the podosome cortex and core at myofibril neuromuscular junctions. Selectively promotes FGF-induced MAPK activation through SRC. May play a role in the polarity, proliferation and migration of endothelial cells. This is Angiomotin-like protein 2 from Rattus norvegicus (Rat).